Consider the following 171-residue polypeptide: Large ribosomal subunit protein uL10 (171 aa).

Belongs to the universal ribosomal protein uL10 family. As to quaternary structure, part of the ribosomal stalk of the 50S ribosomal subunit. The N-terminus interacts with L11 and the large rRNA to form the base of the stalk. The C-terminus forms an elongated spine to which L12 dimers bind in a sequential fashion forming a multimeric L10(L12)X complex.

Its function is as follows. Forms part of the ribosomal stalk, playing a central role in the interaction of the ribosome with GTP-bound translation factors. This Corynebacterium glutamicum (strain ATCC 13032 / DSM 20300 / JCM 1318 / BCRC 11384 / CCUG 27702 / LMG 3730 / NBRC 12168 / NCIMB 10025 / NRRL B-2784 / 534) protein is Large ribosomal subunit protein uL10.